Consider the following 295-residue polypeptide: Protoheme IX farnesyltransferase (295 aa).

A run of 9 helical transmembrane segments spans residues 27–47 (IMYL…GNIH), 48–68 (PFIG…AGAI), 93–115 (IARS…VMMI), 119–136 (YLSG…SLVY), 147–167 (NIVI…TSVT), 175–195 (LILF…LSLL), 219–239 (IYIL…GIFL), 247–267 (TCAI…FVSI), and 275–295 (MFTY…ISSF).

This sequence belongs to the UbiA prenyltransferase family. Protoheme IX farnesyltransferase subfamily.

It localises to the cell inner membrane. It catalyses the reaction heme b + (2E,6E)-farnesyl diphosphate + H2O = Fe(II)-heme o + diphosphate. It participates in porphyrin-containing compound metabolism; heme O biosynthesis; heme O from protoheme: step 1/1. Converts heme B (protoheme IX) to heme O by substitution of the vinyl group on carbon 2 of heme B porphyrin ring with a hydroxyethyl farnesyl side group. This chain is Protoheme IX farnesyltransferase, found in Ehrlichia chaffeensis (strain ATCC CRL-10679 / Arkansas).